The primary structure comprises 1342 residues: DNA-directed RNA polymerase subunit beta (1342 aa).

The protein belongs to the RNA polymerase beta chain family. As to quaternary structure, the RNAP catalytic core consists of 2 alpha, 1 beta, 1 beta' and 1 omega subunit. When a sigma factor is associated with the core the holoenzyme is formed, which can initiate transcription.

It catalyses the reaction RNA(n) + a ribonucleoside 5'-triphosphate = RNA(n+1) + diphosphate. DNA-dependent RNA polymerase catalyzes the transcription of DNA into RNA using the four ribonucleoside triphosphates as substrates. The chain is DNA-directed RNA polymerase subunit beta from Salmonella choleraesuis (strain SC-B67).